The primary structure comprises 446 residues: Na(+)/H(+) antiporter NhaA (446 aa).

The next 11 membrane-spanning stretches (helical) occupy residues 23–43 (GGMLLMGVVLLAMFLANSPWG), 73–93 (LMTFINDALMAVFFFSVGLEI), 109–129 (LLPIVAACGGMLVPVLIYYFM), 138–158 (GLAIPMATDIAFSLGVLSLFG), 167–187 (VFLTAFAVVDDIGGILVIALF), 193–213 (SVNYLIASAGILLILCGGNFF), 219–239 (WFYIFWGVIMWYLFLQSGIHA), 314–334 (MVNYIILPLFAFANAGVSLTA), 348–368 (VLAGLLAGKFAGIYFFTWLVI), 381–401 (WVNLTGICLLGGIGFTVSLFI), and 419–439 (GVILGTVLAGVLAYLVLQFAL).

This sequence belongs to the NhaA Na(+)/H(+) (TC 2.A.33) antiporter family.

It localises to the cell inner membrane. The enzyme catalyses Na(+)(in) + 2 H(+)(out) = Na(+)(out) + 2 H(+)(in). Its function is as follows. Na(+)/H(+) antiporter that extrudes sodium in exchange for external protons. This Phocaeicola vulgatus (strain ATCC 8482 / DSM 1447 / JCM 5826 / CCUG 4940 / NBRC 14291 / NCTC 11154) (Bacteroides vulgatus) protein is Na(+)/H(+) antiporter NhaA.